We begin with the raw amino-acid sequence, 546 residues long: Glutathione synthetase, chloroplastic (546 aa).

Residues 1–63 (MGSGCSSPSI…SPLKCAKVPE (63 aa)) constitute a chloroplast transit peptide. Residue arginine 200 participates in substrate binding. Glutamate 216 serves as a coordination point for ATP. The Mg(2+) site is built by glutamate 216 and asparagine 218. Residues 220 to 223 (ISSS), 288 to 290 (ERN), glutamine 294, and 342 to 345 (RAGY) each bind substrate. ATP is bound by residues lysine 381, 435–444 (KPQREGGGNN), tyrosine 446, 471–474 (MQRI), and glutamate 497. Glutamate 439 serves as a coordination point for Mg(2+). Arginine 522 contacts substrate. ATP contacts are provided by lysine 524 and glutamate 530. A substrate-binding site is contributed by 533–534 (VA).

It belongs to the eukaryotic GSH synthase family. As to quaternary structure, homodimer. Mg(2+) serves as cofactor.

The protein localises to the plastid. It is found in the chloroplast. The enzyme catalyses gamma-L-glutamyl-L-cysteine + glycine + ATP = glutathione + ADP + phosphate + H(+). It functions in the pathway sulfur metabolism; glutathione biosynthesis; glutathione from L-cysteine and L-glutamate: step 2/2. This Solanum lycopersicum (Tomato) protein is Glutathione synthetase, chloroplastic (GSH2).